A 533-amino-acid chain; its full sequence is Quinate permease (533 aa).

The Cytoplasmic portion of the chain corresponds to 1–21 (MSILALVEDRPTPREVYNWRV). The helical transmembrane segment at 22–42 (YLLAAVASFTSCMIGYDSAFI) threads the bilayer. Topologically, residues 43–67 (GTTLSLQSFQNEFNWESLNTDLISA) are extracellular. A helical membrane pass occupies residues 68–88 (NIVSLYQAGAFFGALFAYPIG). The Cytoplasmic segment spans residues 89–94 (HFWGRR). Residues 95-115 (WGLMFSALIFFLGAGMMLGAN) form a helical membrane-spanning segment. The Extracellular portion of the chain corresponds to 116 to 127 (GDRGLGLIYGGR). The chain crosses the membrane as a helical span at residues 128–148 (VLAGIGVGAGSNICPIYISEM). Over 149–156 (APPAIRGR) the chain is Cytoplasmic. Residues 157-177 (LVGVYELGWQIGGVVGFWINY) form a helical membrane-spanning segment. Over 178–191 (GVDETLAPSHKQWI) the chain is Extracellular. Residues 192-212 (IPFAVQLIPAGLLIIGALLIR) form a helical membrane-spanning segment. The Cytoplasmic portion of the chain corresponds to 213 to 282 (ESPRWLFLRG…AWTNKRILYR (70 aa)). Residues 283-303 (LFLGSMLFLWQNGSGINAINY) form a helical membrane-spanning segment. At 304-324 (YSPRVFKSIGVSGGNTSLLTT) the chain is on the extracellular side. Residues 325–346 (GIFGVVKAVITFVWLLYLIDHF) form a helical membrane-spanning segment. The Cytoplasmic portion of the chain corresponds to 347 to 349 (GRR). A helical membrane pass occupies residues 350 to 370 (NLLLVGAAGGSVCLWIVGGYI). Topologically, residues 371-385 (KIAKPENNPEGTQLD) are extracellular. Residues 386–406 (SGGIAAIFFFYLWTAFYTPSW) traverse the membrane as a helical segment. At 407-431 (NGTPWVINSEMFDPTVRSLAQACAA) the chain is on the cytoplasmic side. Residues 432–452 (ASNWLWNFLISRFTPQMFTSM) traverse the membrane as a helical segment. Over 453 to 454 (GY) the chain is Extracellular. Residues 455 to 475 (GVYFFFASLMILSIVFVFFLI) form a helical membrane-spanning segment. Residues 476–533 (PETKGVPLESMETLFDKKPVWHAHSQLIRELRENEEAFRADMGASGKGGVTKEYVEEA) are Cytoplasmic-facing.

This sequence belongs to the major facilitator superfamily. Sugar transporter (TC 2.A.1.1) family. As to quaternary structure, interacts with creB. Ubiquitinated. Deubiquitinated by creB, probably to control its activity or amount.

It localises to the cell membrane. Integral membrane transporter that imports quinic acid to be catabolized as a carbon source. The sequence is that of Quinate permease (qutD) from Emericella nidulans (strain FGSC A4 / ATCC 38163 / CBS 112.46 / NRRL 194 / M139) (Aspergillus nidulans).